We begin with the raw amino-acid sequence, 133 residues long: Large ribosomal subunit protein bL17 (133 aa).

Belongs to the bacterial ribosomal protein bL17 family. As to quaternary structure, part of the 50S ribosomal subunit. Contacts protein L32.

The polypeptide is Large ribosomal subunit protein bL17 (Polaromonas naphthalenivorans (strain CJ2)).